A 629-amino-acid chain; its full sequence is tRNA uridine 5-carboxymethylaminomethyl modification enzyme MnmG (629 aa).

Residues 13–18 (GGGHAG), V125, and S180 each bind FAD. 273–287 (GPRYCPSIEDKVMRF) is an NAD(+) binding site. Q370 contacts FAD.

Belongs to the MnmG family. In terms of assembly, homodimer. Heterotetramer of two MnmE and two MnmG subunits. It depends on FAD as a cofactor.

It localises to the cytoplasm. In terms of biological role, NAD-binding protein involved in the addition of a carboxymethylaminomethyl (cmnm) group at the wobble position (U34) of certain tRNAs, forming tRNA-cmnm(5)s(2)U34. The sequence is that of tRNA uridine 5-carboxymethylaminomethyl modification enzyme MnmG from Salmonella typhi.